The following is a 519-amino-acid chain: MSARSVSPKVLLDISYKPTLPNIMELQHNVIKLIQVEQHAYMQLMEQPTAHYMQQQQQQQQHQQQQQQHQQQQQQQYAPLPSLAPNAADYAAYGITELEDTDYNIPSNEVLSTSSNHSAQSSLELNNNQHNFEQQQQQQQQQQQQQTATPAGVATAAQTPHGYMLNEHGKRSRSSSDYDCQTDALSMQPEHKKLLQQQQQQQQQQQQQQQQQLYVDYLPTTVDEVAAAQTQAQAPTQQSACLSPHSHSHSHFDFAADEELQDHKAHIFKYGGYPQTIAQQQQQQQQQQLHFQSSYRTGQNYEAYDPANSLNGSTYSSSDRDDMEYARQTALSSVGGYAKEDELEDMSPTCLGDDSSLLDAGDAAGKAFRKPRRRLKRKPSKTEETDEFSNQRVMANVRERQRTQSLNDAFKALQQIIPTLPSDKLSKIQTLKLATRYIDFLCRMLSSSDISLLKALEAQSSPVSPGYGNASTLLSAANGAEADLKCLRKANGAPIIPPEKLSYLFGVWRMEGDAQHQKA.

4 disordered regions span residues 53 to 77 (MQQQ…QQQY), 131 to 156 (NFEQ…VATA), 301 to 321 (YEAY…SDRD), and 368 to 389 (FRKP…DEFS). 2 stretches are compositionally biased toward low complexity: residues 54–76 (QQQQ…QQQQ) and 134–146 (QQQQ…QQQQ). Residues 308 to 317 (NSLNGSTYSS) are compositionally biased toward polar residues. Basic residues predominate over residues 368-379 (FRKPRRRLKRKP). Residues 390–441 (NQRVMANVRERQRTQSLNDAFKALQQIIPTLPSDKLSKIQTLKLATRYIDFL) enclose the bHLH domain.

Efficient DNA binding requires dimerization with another bHLH protein. Homodimer.

Its subcellular location is the nucleus. Involved in the establishment and dorsoventral patterning of germ layers in the embryo. This Drosophila virilis (Fruit fly) protein is Protein twist.